The primary structure comprises 364 residues: Trans-enoyl reductase traG (364 aa).

51 to 54 is a binding site for NADP(+); that stretch reads VDAK. 136–143 contacts substrate; the sequence is LGLFTAGL. NADP(+)-binding positions include 176–179, 199–202, Y217, and 264–265; these read STAT, SKAN, and LE. Residue 286 to 290 coordinates substrate; the sequence is ALTVF. Position 355-356 (355-356) interacts with NADP(+); sequence MS.

The protein belongs to the zinc-containing alcohol dehydrogenase family. In terms of assembly, monomer.

It functions in the pathway secondary metabolite biosynthesis. In terms of biological role, trans-enoyl reductase; part of the tra gene cluster that produces terrestric acid. The clavatol biosynthesis cluster cla and the terrestric acid cluster tra are both involved in the production of peniphenones and penilactones. The non-reducing PKS claF is responsible for the formation of clavatol from successive condensations of 3 malonyl-CoA units, presumably with a simple acetyl-CoA starter unit, and 2 methylation steps. The esterase claE probably collaborates with claF by catalyzing the hydrolysis of ACP-bound acyl intermediates to free the ACP from stalled intermediates. The clavatol oxidase claD then converts clavatol to hydroxyclavatol. Spontaneous dehydration of hydroxyclavatol leads to the accumulation of the highly active ortho-quinone methide. On the other hand, the PKS-NRPS hybrid traA is involved in the formation of crustosic acid, with the help of traB and traD. The polyketide synthase module (PKS) of traA is responsible for the synthesis of the polyketide backbone via the condensation of an acetyl-CoA starter unit with 3 malonyl-CoA units. The downstream nonribosomal peptide synthetase (NRPS) module then amidates the carboxyl end of the polyketide with L-malic acid. Because traA lacks a designated enoylreductase (ER) domain, the required activity is provided the enoyl reductase traG. Crustosic acid undergoes decarboxylation and isomerization to the terrestric acid, catalyzed by the 2-oxoglutarate-dependent dioxygenase traH. Both acids are further converted to the 2 gamma-butyrolactones (R)-5-methyltetronic acid and (S)-5-carboxylmethyltetronic acid, with involvement of the cytochrome P450 monooxygenase claJ. Spontaneous addition of the methide to these gamma-butyrolactones leads to peniphenone D and penilactone D, which undergo again stereospecific attacking by methide to give penilactones A and B. This chain is Trans-enoyl reductase traG, found in Penicillium crustosum (Blue mold fungus).